Reading from the N-terminus, the 581-residue chain is Proline--tRNA ligase (581 aa).

Belongs to the class-II aminoacyl-tRNA synthetase family. ProS type 1 subfamily. As to quaternary structure, homodimer.

Its subcellular location is the cytoplasm. It catalyses the reaction tRNA(Pro) + L-proline + ATP = L-prolyl-tRNA(Pro) + AMP + diphosphate. In terms of biological role, catalyzes the attachment of proline to tRNA(Pro) in a two-step reaction: proline is first activated by ATP to form Pro-AMP and then transferred to the acceptor end of tRNA(Pro). As ProRS can inadvertently accommodate and process non-cognate amino acids such as alanine and cysteine, to avoid such errors it has two additional distinct editing activities against alanine. One activity is designated as 'pretransfer' editing and involves the tRNA(Pro)-independent hydrolysis of activated Ala-AMP. The other activity is designated 'posttransfer' editing and involves deacylation of mischarged Ala-tRNA(Pro). The misacylated Cys-tRNA(Pro) is not edited by ProRS. The sequence is that of Proline--tRNA ligase from Variovorax paradoxus (strain S110).